Reading from the N-terminus, the 245-residue chain is 1-(5-phosphoribosyl)-5-[(5-phosphoribosylamino)methylideneamino] imidazole-4-carboxamide isomerase (245 aa).

Catalysis depends on aspartate 7, which acts as the Proton acceptor. Aspartate 129 acts as the Proton donor in catalysis.

This sequence belongs to the HisA/HisF family.

The protein resides in the cytoplasm. The enzyme catalyses 1-(5-phospho-beta-D-ribosyl)-5-[(5-phospho-beta-D-ribosylamino)methylideneamino]imidazole-4-carboxamide = 5-[(5-phospho-1-deoxy-D-ribulos-1-ylimino)methylamino]-1-(5-phospho-beta-D-ribosyl)imidazole-4-carboxamide. It participates in amino-acid biosynthesis; L-histidine biosynthesis; L-histidine from 5-phospho-alpha-D-ribose 1-diphosphate: step 4/9. In Escherichia coli O6:K15:H31 (strain 536 / UPEC), this protein is 1-(5-phosphoribosyl)-5-[(5-phosphoribosylamino)methylideneamino] imidazole-4-carboxamide isomerase.